Reading from the N-terminus, the 297-residue chain is Universal stress protein MT2698 (297 aa).

ATP contacts are provided by residues Gly-13, Ala-43, 117–123 (GCLGSGR), Arg-127, 131–132 (SV), Gly-165, Asp-198, 262–268 (GSRGRGG), and 276–278 (SVG).

It belongs to the universal stress protein A family. Homodimer.

Functionally, may play a role in the establishment of a persistent infection (latency) in the host. This Mycobacterium tuberculosis (strain CDC 1551 / Oshkosh) protein is Universal stress protein MT2698.